Here is a 249-residue protein sequence, read N- to C-terminus: MATDAPEAPVALVTGSSSGIGQTVAQRLAAEGYRVVVNSARSVEDGEKTAAALPDALYVRADVSEEADARRLVDTAVEHYGRLDVLVNNAGRTRAIPHADLAAATPEVWREILGLNVIGTWQTTVAAMPHLARSGNGSVVNVSSIAGSRPAGSSIPYAVSNGGHRAQTRLLANTVGPAVRVNAVAPGLIETPWTQNSDFFAPIAEHVRQTTPLRRTGRPEDVAEAVLGLVRATYTTGQVLLVDGGAHLL.

NAD(+) is bound at residue 12–36 (LVTGSSSGIGQTVAQRLAAEGYRVV). Ser-144 is a binding site for substrate. The Proton acceptor role is filled by Tyr-157.

It belongs to the short-chain dehydrogenases/reductases (SDR) family.

Its pathway is antibiotic biosynthesis; granaticin biosynthesis. The chain is Granaticin polyketide synthase putative ketoacyl reductase 2 (gra-orf6) from Streptomyces violaceoruber.